The sequence spans 161 residues: RNA pyrophosphohydrolase (161 aa).

The Nudix hydrolase domain occupies 6-149; the sequence is GFRPNVGIIL…KRDVYRKAMV (144 aa). The short motif at 38–59 is the Nudix box element; that stretch reads GGIQFGETPEQALFRELREEIG.

It belongs to the Nudix hydrolase family. RppH subfamily. A divalent metal cation serves as cofactor.

Functionally, accelerates the degradation of transcripts by removing pyrophosphate from the 5'-end of triphosphorylated RNA, leading to a more labile monophosphorylated state that can stimulate subsequent ribonuclease cleavage. The chain is RNA pyrophosphohydrolase from Acinetobacter baumannii (strain AB307-0294).